Reading from the N-terminus, the 263-residue chain is tRNA pseudouridine synthase A (263 aa).

Aspartate 51 acts as the Nucleophile in catalysis. Tyrosine 106 is a substrate binding site.

This sequence belongs to the tRNA pseudouridine synthase TruA family.

It catalyses the reaction uridine(38/39/40) in tRNA = pseudouridine(38/39/40) in tRNA. In terms of biological role, formation of pseudouridine at positions 38, 39 and 40 in the anticodon stem and loop of transfer RNAs. In Pyrococcus abyssi (strain GE5 / Orsay), this protein is tRNA pseudouridine synthase A.